The following is a 201-amino-acid chain: Large ribosomal subunit protein bL25 (201 aa).

The protein belongs to the bacterial ribosomal protein bL25 family. CTC subfamily. Part of the 50S ribosomal subunit; part of the 5S rRNA/L5/L18/L25 subcomplex. Contacts the 5S rRNA. Binds to the 5S rRNA independently of L5 and L18.

In terms of biological role, this is one of the proteins that binds to the 5S RNA in the ribosome where it forms part of the central protuberance. The protein is Large ribosomal subunit protein bL25 of Ectopseudomonas mendocina (strain ymp) (Pseudomonas mendocina).